Here is a 352-residue protein sequence, read N- to C-terminus: 4-hydroxy-3-methylbut-2-en-1-yl diphosphate synthase (flavodoxin) (352 aa).

[4Fe-4S] cluster contacts are provided by Cys-263, Cys-266, Cys-298, and Glu-305.

The protein belongs to the IspG family. [4Fe-4S] cluster is required as a cofactor.

It catalyses the reaction (2E)-4-hydroxy-3-methylbut-2-enyl diphosphate + oxidized [flavodoxin] + H2O + 2 H(+) = 2-C-methyl-D-erythritol 2,4-cyclic diphosphate + reduced [flavodoxin]. Its pathway is isoprenoid biosynthesis; isopentenyl diphosphate biosynthesis via DXP pathway; isopentenyl diphosphate from 1-deoxy-D-xylulose 5-phosphate: step 5/6. Converts 2C-methyl-D-erythritol 2,4-cyclodiphosphate (ME-2,4cPP) into 1-hydroxy-2-methyl-2-(E)-butenyl 4-diphosphate. In Sulfurimonas denitrificans (strain ATCC 33889 / DSM 1251) (Thiomicrospira denitrificans (strain ATCC 33889 / DSM 1251)), this protein is 4-hydroxy-3-methylbut-2-en-1-yl diphosphate synthase (flavodoxin).